We begin with the raw amino-acid sequence, 86 residues long: Large ribosomal subunit protein bL31B (86 aa).

This sequence belongs to the bacterial ribosomal protein bL31 family. Type B subfamily. Part of the 50S ribosomal subunit.

In Saccharopolyspora erythraea (strain ATCC 11635 / DSM 40517 / JCM 4748 / NBRC 13426 / NCIMB 8594 / NRRL 2338), this protein is Large ribosomal subunit protein bL31B.